The primary structure comprises 513 residues: tRNA A64-2'-O-ribosylphosphate transferase (513 aa).

Its function is as follows. tRNA backbone modifying enzyme that mediates initiator/ elongator tRNA discrimination. This enzyme modifies exclusively the initiator tRNA in position 64 using 5'-phosphoribosyl-1'-pyrophosphate as the modification donor. Recognize the stem-loop IV region that is unique in eukaryotic cytoplasmic initiator tRNAs. This is tRNA A64-2'-O-ribosylphosphate transferase (RIT1) from Saccharomyces cerevisiae (strain ATCC 204508 / S288c) (Baker's yeast).